We begin with the raw amino-acid sequence, 391 residues long: E3 ubiquitin-protein ligase RMND5A (391 aa).

The LisH domain occupies 114-146 (SQQILSEVMVEHFFRQGMLDVAEELCQEAGLSI). In terms of domain architecture, CTLH spans 153 to 210 (PFVELNRILEALKVRVLRPALEWAVSNREMLMAQNSSLEFKLHRLYFISLLMGGTVNQ). Residues 336-377 (CPILRQQTTDNNPPMKLVCGHIISRDALNKMFNGSKLKCPYC) form an RING-Gid-type zinc finger.

In terms of assembly, identified in the CTLH complex that contains at least RANBP9, MKLN1, MAEA, RMND5A, GID8 and ARMC8.

The protein resides in the nucleus. It localises to the nucleoplasm. Its subcellular location is the cytoplasm. The enzyme catalyses S-ubiquitinyl-[E2 ubiquitin-conjugating enzyme]-L-cysteine + [acceptor protein]-L-lysine = [E2 ubiquitin-conjugating enzyme]-L-cysteine + N(6)-ubiquitinyl-[acceptor protein]-L-lysine.. Functionally, E3 ubiquitin-protein ligase component of the CTLH complex. This Xenopus tropicalis (Western clawed frog) protein is E3 ubiquitin-protein ligase RMND5A (rmnd5a).